An 82-amino-acid chain; its full sequence is MKENIHPQYRTVIFHDTSVDAYFKVGSTIQTDKTIEYEGQRYPYVTLDVSSQSHPFYTGKQKTHSQEGNVARFNKRFGRFVN.

The protein belongs to the bacterial ribosomal protein bL31 family. Type B subfamily. As to quaternary structure, part of the 50S ribosomal subunit.

This is Large ribosomal subunit protein bL31B from Proteus mirabilis (strain HI4320).